The chain runs to 264 residues: Phosphoribosylaminoimidazole-succinocarboxamide synthase (264 aa).

Belongs to the SAICAR synthetase family.

It carries out the reaction 5-amino-1-(5-phospho-D-ribosyl)imidazole-4-carboxylate + L-aspartate + ATP = (2S)-2-[5-amino-1-(5-phospho-beta-D-ribosyl)imidazole-4-carboxamido]succinate + ADP + phosphate + 2 H(+). The protein operates within purine metabolism; IMP biosynthesis via de novo pathway; 5-amino-1-(5-phospho-D-ribosyl)imidazole-4-carboxamide from 5-amino-1-(5-phospho-D-ribosyl)imidazole-4-carboxylate: step 1/2. The polypeptide is Phosphoribosylaminoimidazole-succinocarboxamide synthase (purC) (Synechocystis sp. (strain ATCC 27184 / PCC 6803 / Kazusa)).